The sequence spans 252 residues: 3-deoxy-manno-octulosonate cytidylyltransferase (252 aa).

This sequence belongs to the KdsB family.

It is found in the cytoplasm. The catalysed reaction is 3-deoxy-alpha-D-manno-oct-2-ulosonate + CTP = CMP-3-deoxy-beta-D-manno-octulosonate + diphosphate. Its pathway is nucleotide-sugar biosynthesis; CMP-3-deoxy-D-manno-octulosonate biosynthesis; CMP-3-deoxy-D-manno-octulosonate from 3-deoxy-D-manno-octulosonate and CTP: step 1/1. It functions in the pathway bacterial outer membrane biogenesis; lipopolysaccharide biosynthesis. Activates KDO (a required 8-carbon sugar) for incorporation into bacterial lipopolysaccharide in Gram-negative bacteria. The chain is 3-deoxy-manno-octulosonate cytidylyltransferase from Vibrio campbellii (strain ATCC BAA-1116).